The sequence spans 141 residues: Hemoglobin subunit alpha-1/2/3 (141 aa).

Positions 1–141 constitute a Globin domain; sequence VLSPADKTNV…VGTVLTSKYR (141 aa). Phosphoserine is present on serine 3. At lysine 7 the chain carries N6-succinyllysine. Residue threonine 8 is modified to Phosphothreonine. Lysine 11 is modified (N6-succinyllysine). Lysine 16 is modified (N6-acetyllysine; alternate). At lysine 16 the chain carries N6-succinyllysine; alternate. Tyrosine 24 carries the phosphotyrosine modification. Serine 35 carries the post-translational modification Phosphoserine. Lysine 40 carries the N6-succinyllysine modification. Position 49 is a phosphoserine (serine 49). Histidine 58 serves as a coordination point for O2. Heme b is bound at residue histidine 87. Position 102 is a phosphoserine (serine 102). Phosphothreonine is present on threonine 108. Phosphoserine occurs at positions 124 and 131. 2 positions are modified to phosphothreonine: threonine 134 and threonine 137. A Phosphoserine modification is found at serine 138.

This sequence belongs to the globin family. Heterotetramer of two alpha chains and two beta chains. In terms of tissue distribution, red blood cells.

Involved in oxygen transport from the lung to the various peripheral tissues. The polypeptide is Hemoglobin subunit alpha-1/2/3 (Macaca nemestrina (Pig-tailed macaque)).